We begin with the raw amino-acid sequence, 74 residues long: Translation initiation factor IF-1 (74 aa).

The S1-like domain maps to 1–73; the sequence is MAKKDDIIEF…TKGRITYRGK (73 aa).

This sequence belongs to the IF-1 family. As to quaternary structure, component of the 30S ribosomal translation pre-initiation complex which assembles on the 30S ribosome in the order IF-2 and IF-3, IF-1 and N-formylmethionyl-tRNA(fMet); mRNA recruitment can occur at any time during PIC assembly.

It is found in the cytoplasm. One of the essential components for the initiation of protein synthesis. Stabilizes the binding of IF-2 and IF-3 on the 30S subunit to which N-formylmethionyl-tRNA(fMet) subsequently binds. Helps modulate mRNA selection, yielding the 30S pre-initiation complex (PIC). Upon addition of the 50S ribosomal subunit IF-1, IF-2 and IF-3 are released leaving the mature 70S translation initiation complex. The protein is Translation initiation factor IF-1 of Psychrobacter sp. (strain PRwf-1).